Here is a 130-residue protein sequence, read N- to C-terminus: Small ribosomal subunit protein uS11c (130 aa).

This sequence belongs to the universal ribosomal protein uS11 family. In terms of assembly, part of the 30S ribosomal subunit.

It localises to the plastid. The protein resides in the chloroplast. The chain is Small ribosomal subunit protein uS11c from Chaetosphaeridium globosum (Charophycean green alga).